We begin with the raw amino-acid sequence, 150 residues long: MSNLEFVYKYFNSLDVKELYDIYLLRTNVFVVEQKCAYPEVDEIDLKCGHLMLRNANGKLVAYARLIPEQQQTVRIGRVVVDPDERKNGYGRKLMLQALETSKQEFSSSKTFVLSSQEYAQPLYRSVGFKKCSDAYLEDGIPHVEMRLEL.

One can recognise an N-acetyltransferase domain in the interval 9-150 (KYFNSLDVKE…IPHVEMRLEL (142 aa)).

This sequence belongs to the UPF0039 (ElaA) family.

The protein is UPF0039 protein C11D3.02c of Schizosaccharomyces pombe (strain 972 / ATCC 24843) (Fission yeast).